Reading from the N-terminus, the 198-residue chain is Recombination protein RecR (198 aa).

The C4-type zinc-finger motif lies at 58-73 (CSVCGNFTDKDPCAIC). The Toprim domain occupies 81–175 (SIICVIEQPK…KVTRIAHGVP (95 aa)).

This sequence belongs to the RecR family.

Its function is as follows. May play a role in DNA repair. It seems to be involved in an RecBC-independent recombinational process of DNA repair. It may act with RecF and RecO. The sequence is that of Recombination protein RecR from Clostridium botulinum (strain ATCC 19397 / Type A).